The sequence spans 965 residues: Fibronectin-binding protein A (965 aa).

The N-terminal stretch at 1-36 (MKNNLRYGIRKHKLGAASVFLGTMIVIGMGQDKEAA) is a signal peptide. The YSIRK-G/S signaling motif signature appears at 7–18 (YGIRKHKLGAAS). The disordered stretch occupies residues 37–206 (ASEQKTTTVE…VTSKVTVEDE (170 aa)). Residues 37-514 (ASEQKTTTVE…SNKANGDGKY (478 aa)) form a ligand-binding A region region. A compositionally biased stretch (polar residues) spans 39-55 (EQKTTTVEENGNSATDN). Residues 59–74 (ETQTTTTNVNTIDETQ) show a composition bias toward low complexity. Residues 75-92 (SYSATATEQPSNATQVTT) are compositionally biased toward polar residues. Residues 112–122 (TVKEEVVKEEA) are compositionally biased toward basic and acidic residues. A compositionally biased stretch (polar residues) spans 126 to 139 (VKETTQSQDNSGDQ). Residues 179 to 193 (DVAEAKEASDAKVET) are compositionally biased toward basic and acidic residues. The fibrinogen/elastin/tropoelastin-binding stretch occupies residues 194–514 (GTDVTSKVTV…SNKANGDGKY (321 aa)). A fibronectin-binding region spans residues 515–837 (GPIVDSNNFE…EGQQTIEEDT (323 aa)). The B-1 repeat unit spans residues 548–577 (ENQDNTPLDIDYHTAIDGEGGYVDGYIETI). Residues 548 to 607 (ENQDNTPLDIDYHTAIDGEGGYVDGYIETIEETDSSAIDIDYHTAVDSEAGHVGGYTESS) form a 2 X approximate tandem repeats region. Residues 578–607 (EETDSSAIDIDYHTAVDSEAGHVGGYTESS) form a B-2 repeat. Disordered regions lie at residues 598 to 625 (GHVGGYTESSEESNPIDFEESTHENSKH), 743 to 774 (LGYEGGQNSGNQSFEEDTEEDKPKYEQGGNII), 794 to 903 (IEED…GKVV), and 916 to 942 (VAPTKQKQAKKSELPETGGEESTNKGM). The stretch at 748 to 770 (GQNSGNQSFEEDTEEDKPKYEQG) is one D-1; truncated repeat. The segment at 748-839 (GQNSGNQSFE…QQTIEEDTTP (92 aa)) is 4 X approximate tandem repeats. Residues 771–785 (GNIIDIDFDSVPQIH) form a D-2; truncated repeat. A D-3 repeat occupies 786-824 (GFNKHNEIIEEDTNKDKPNYQFGGHNSVDFEEDTLPKVS). The span at 794–803 (IEEDTNKDKP) shows a compositional bias: basic and acidic residues. The stretch at 825 to 839 (GQNEGQQTIEEDTTP) is one D-4; truncated repeat. Positions 839–885 (PPTPPTPEVPSEPGTPTPPTPEVPSEPGKPTPPTPEVPAEPGKPVPP) are enriched in pro residues. WR repeat units lie at residues 840 to 853 (PTPPTPEVPSEPGT), 854 to 867 (PTPPTPEVPSEPGK), 868 to 881 (PTPPTPEVPAEPGK), and 882 to 895 (PVPPAKEEPKKPSK). The tract at residues 840 to 895 (PTPPTPEVPSEPGTPTPPTPEVPSEPGKPTPPTPEVPAEPGKPVPPAKEEPKKPSK) is 4 X tandem repeats, Pro-rich (WR). The short motif at 929-933 (LPETG) is the LPXTG sorting signal element. A Pentaglycyl murein peptidoglycan amidated threonine modification is found at T932. A propeptide spans 933–965 (GGEESTNKGMLFGGLFSILGLALLRRNKKNHKA) (removed by sortase).

It is found in the secreted. The protein localises to the cell wall. Promotes bacterial attachment to multiple substrates, such as fibronectin (Fn), fibrinogen (Fg), elastin peptides and tropoelastin. This confers to S.aureus the ability to invade endothelial cells. Promotes adherence to and aggregation of activated platelets. In Staphylococcus aureus (strain MRSA252), this protein is Fibronectin-binding protein A (fnbA).